The primary structure comprises 485 residues: Polyol:NADP oxidoreductase (485 aa).

The protein belongs to the mannitol dehydrogenase family.

Its subcellular location is the cytoplasm. The polypeptide is Polyol:NADP oxidoreductase (por) (Gluconobacter oxydans (strain 621H) (Gluconobacter suboxydans)).